The primary structure comprises 331 residues: Ketol-acid reductoisomerase (NADP(+)) (331 aa).

Positions 2 to 182 (AKMYYDKDAD…GGTRAGVIET (181 aa)) constitute a KARI N-terminal Rossmann domain. Residues 25–28 (FGSQ), Ser-51, Ser-53, and 83–86 (DEKQ) contribute to the NADP(+) site. His-108 is an active-site residue. NADP(+) is bound at residue Gly-134. Positions 183 to 328 (TFKEETETDL…KGLREMMAWI (146 aa)) constitute a KARI C-terminal knotted domain. Residues Asp-191, Glu-195, Glu-227, and Glu-231 each coordinate Mg(2+). Ser-252 lines the substrate pocket.

The protein belongs to the ketol-acid reductoisomerase family. It depends on Mg(2+) as a cofactor.

The enzyme catalyses (2R)-2,3-dihydroxy-3-methylbutanoate + NADP(+) = (2S)-2-acetolactate + NADPH + H(+). It carries out the reaction (2R,3R)-2,3-dihydroxy-3-methylpentanoate + NADP(+) = (S)-2-ethyl-2-hydroxy-3-oxobutanoate + NADPH + H(+). Its pathway is amino-acid biosynthesis; L-isoleucine biosynthesis; L-isoleucine from 2-oxobutanoate: step 2/4. The protein operates within amino-acid biosynthesis; L-valine biosynthesis; L-valine from pyruvate: step 2/4. Functionally, involved in the biosynthesis of branched-chain amino acids (BCAA). Catalyzes an alkyl-migration followed by a ketol-acid reduction of (S)-2-acetolactate (S2AL) to yield (R)-2,3-dihydroxy-isovalerate. In the isomerase reaction, S2AL is rearranged via a Mg-dependent methyl migration to produce 3-hydroxy-3-methyl-2-ketobutyrate (HMKB). In the reductase reaction, this 2-ketoacid undergoes a metal-dependent reduction by NADPH to yield (R)-2,3-dihydroxy-isovalerate. This is Ketol-acid reductoisomerase (NADP(+)) from Thermoanaerobacter sp. (strain X514).